A 445-amino-acid chain; its full sequence is Argininosuccinate synthase (445 aa).

Residues Ala17–Ser25 and Ala43 each bind ATP. Tyr99 lines the L-citrulline pocket. ATP contacts are provided by Gly129 and Thr131. Residues Thr131, Asn135, and Asp136 each contribute to the L-aspartate site. Asn135 provides a ligand contact to L-citrulline. Asp136 is a binding site for ATP. L-citrulline contacts are provided by Arg139 and Ser192. Position 194 (Asp194) interacts with ATP. The L-citrulline site is built by Thr201, Glu203, and Glu280.

This sequence belongs to the argininosuccinate synthase family. Type 2 subfamily. As to quaternary structure, homotetramer.

It localises to the cytoplasm. The enzyme catalyses L-citrulline + L-aspartate + ATP = 2-(N(omega)-L-arginino)succinate + AMP + diphosphate + H(+). Its pathway is amino-acid biosynthesis; L-arginine biosynthesis; L-arginine from L-ornithine and carbamoyl phosphate: step 2/3. The polypeptide is Argininosuccinate synthase (Burkholderia ambifaria (strain MC40-6)).